The chain runs to 396 residues: MTKTLHFDCLSGISGDMTLGALIDLGVSVDQIQQGLHSLNLPDLKLRTEEVKKCGFRAVQIHIDHPPEKAHRHLHHIDAMIDEATEINDSAKALAKKIFLCVGEAEAKVHGCSLRKVHFHEVGAIDSIADIVGVAIAIDALDVQHATSSTIPTGTGAITIDHGRVAVPAPATAEILTGVPLMACDIESELTTPTGAAIIKTLARSFGPPPAMTPLRVGYGSGTRDLEGQANVLRVTLGELTEASSSQGQIETDRVTLLESNIDDATAEQLANVSELLMSAGALDVWQTPIVMKKGRLATTVSVLCDASRIGALQTLLFTQTSTIGLRRTEMNRSKLARESQTVETPDGPAKGKTVRLPDGTLRFSLENDEVKRLCAATGKSADQIRTEAQAAFAAG.

A disordered region spans residues 333 to 355 (RSKLARESQTVETPDGPAKGKTV).

The protein belongs to the LarC family.

The polypeptide is Putative nickel insertion protein (Rhodopirellula baltica (strain DSM 10527 / NCIMB 13988 / SH1)).